Reading from the N-terminus, the 235-residue chain is tRNA pseudouridine synthase B (235 aa).

Residue aspartate 45 is the Nucleophile of the active site.

This sequence belongs to the pseudouridine synthase TruB family. Type 1 subfamily.

The catalysed reaction is uridine(55) in tRNA = pseudouridine(55) in tRNA. Responsible for synthesis of pseudouridine from uracil-55 in the psi GC loop of transfer RNAs. In Chlamydia abortus (strain DSM 27085 / S26/3) (Chlamydophila abortus), this protein is tRNA pseudouridine synthase B.